The sequence spans 318 residues: MEKPSSGANHVAKATVSLSIASVLILGAVLTMLSIQLDEAHERLQNRMGSFKFVARNIWHDIVLVKSNGRIKRQYGGYGSDSAQSDNQQCTSCVQLRCPPGPIGPPGVSGEPGMDGANGRPGKPGLDGLDVPLDPEPAFPCVICPAGPPGTRGPQGEVGRPGQTGESGHPGLPGRPGKPGRVGDAGPQGEPGEQGEPGIKGPPGDDSIGGTGIKGPPGPPGPRGPKGPPGSNGLPSQNSGPPGPIGEMGPPGPPGPRGEPGPPGPFGPPGDSGEPGGHCPSSCGVQEIVAPSVSELDTNDEPEKPARGGYSGGGYGKK.

Triple-helical region stretches follow at residues 101–130 (GPIG…DGLD), 147–206 (GPPG…PGDD), 209–235 (GGTG…NGLP), and 240–278 (GPPG…PGGH). Residues 101–318 (GPIGPPGVSG…GYSGGGYGKK (218 aa)) are disordered. The span at 187–204 (PQGEPGEQGEPGIKGPPG) shows a compositional bias: low complexity. 2 stretches are compositionally biased toward pro residues: residues 216–228 (PPGP…PKGP) and 250–268 (PPGP…PFGP). The segment covering 309 to 318 (GYSGGGYGKK) has biased composition (gly residues).

The protein belongs to the cuticular collagen family. In terms of assembly, collagen polypeptide chains are complexed within the cuticle by disulfide bonds and other types of covalent cross-links.

Nematode cuticles are composed largely of collagen-like proteins. The cuticle functions both as an exoskeleton and as a barrier to protect the worm from its environment. Mutations in dpy-7 affects the body shape. This Caenorhabditis elegans protein is Cuticle collagen dpy-7 (dpy-7).